Reading from the N-terminus, the 463-residue chain is Chaperone SurA (463 aa).

An N-terminal signal peptide occupies residues 1-25 (MTKPFSVVLASLLAITSTISPLASA). 2 consecutive PpiC domains span residues 174–276 (GSKY…KLME) and 289–388 (VTEY…QRVG). Disordered regions lie at residues 329-348 (ATAKESSEDTNSRGQGGDLG) and 434-463 (GDRADNNATAAPAKSADPALPAPPPAKPTR). The segment covering 439–452 (NNATAAPAKSADPA) has biased composition (low complexity). A compositionally biased stretch (pro residues) spans 453 to 463 (LPAPPPAKPTR).

It is found in the periplasm. The enzyme catalyses [protein]-peptidylproline (omega=180) = [protein]-peptidylproline (omega=0). In terms of biological role, chaperone involved in the correct folding and assembly of outer membrane proteins. Recognizes specific patterns of aromatic residues and the orientation of their side chains, which are found more frequently in integral outer membrane proteins. May act in both early periplasmic and late outer membrane-associated steps of protein maturation. This chain is Chaperone SurA, found in Xanthomonas oryzae pv. oryzae (strain KACC10331 / KXO85).